The chain runs to 78 residues: Small ribosomal subunit protein bS16c (78 aa).

It belongs to the bacterial ribosomal protein bS16 family.

The protein localises to the plastid. Its subcellular location is the chloroplast. This is Small ribosomal subunit protein bS16c from Phaeodactylum tricornutum (strain CCAP 1055/1).